The following is a 24-amino-acid chain: Brevinin-1GRa (24 aa).

Expressed by the skin glands.

It is found in the secreted. In terms of biological role, antimicrobial peptide active against the Gram-positive bacterium S.aureus (MIC=12.5 uM) and against the Gram-negative bacteria E.coli (MIC=25 uM). The protein is Brevinin-1GRa of Odorrana grahami (Yunnanfu frog).